A 226-amino-acid chain; its full sequence is 2-C-methyl-D-erythritol 4-phosphate cytidylyltransferase (226 aa).

This sequence belongs to the IspD/TarI cytidylyltransferase family. IspD subfamily.

The catalysed reaction is 2-C-methyl-D-erythritol 4-phosphate + CTP + H(+) = 4-CDP-2-C-methyl-D-erythritol + diphosphate. It functions in the pathway isoprenoid biosynthesis; isopentenyl diphosphate biosynthesis via DXP pathway; isopentenyl diphosphate from 1-deoxy-D-xylulose 5-phosphate: step 2/6. Its function is as follows. Catalyzes the formation of 4-diphosphocytidyl-2-C-methyl-D-erythritol from CTP and 2-C-methyl-D-erythritol 4-phosphate (MEP). The polypeptide is 2-C-methyl-D-erythritol 4-phosphate cytidylyltransferase (Actinobacillus pleuropneumoniae serotype 7 (strain AP76)).